The primary structure comprises 490 residues: Betaine aldehyde dehydrogenase (490 aa).

3 residues coordinate K(+): Thr-26, Ile-27, and Asp-93. 150–152 (GAW) is an NAD(+) binding site. The active-site Charge relay system is Lys-162. 176-179 (KPSE) is an NAD(+) binding site. Position 180 (Val-180) interacts with K(+). 230 to 233 (GVAS) contacts NAD(+). Leu-246 contributes to the K(+) binding site. The active-site Proton acceptor is Glu-252. Gly-254, Cys-286, and Glu-387 together coordinate NAD(+). The active-site Nucleophile is Cys-286. Cysteine sulfenic acid (-SOH) is present on Cys-286. Residues Lys-457 and Gly-460 each contribute to the K(+) site. Residue Glu-464 is the Charge relay system of the active site.

The protein belongs to the aldehyde dehydrogenase family. Dimer of dimers. It depends on K(+) as a cofactor.

The enzyme catalyses betaine aldehyde + NAD(+) + H2O = glycine betaine + NADH + 2 H(+). Its pathway is amine and polyamine biosynthesis; betaine biosynthesis via choline pathway; betaine from betaine aldehyde: step 1/1. In terms of biological role, involved in the biosynthesis of the osmoprotectant glycine betaine. Catalyzes the irreversible oxidation of betaine aldehyde to the corresponding acid. This is Betaine aldehyde dehydrogenase from Shigella flexneri serotype 5b (strain 8401).